The primary structure comprises 338 residues: Glutamyl-tRNA reductase (338 aa).

Residues threonine 50–arginine 53, serine 102, glutamate 107–glutamate 109, and glutamine 113 each bind substrate. Cysteine 51 (nucleophile) is an active-site residue. NADP(+) is bound at residue glycine 181–asparagine 186.

Belongs to the glutamyl-tRNA reductase family. As to quaternary structure, homodimer.

It carries out the reaction (S)-4-amino-5-oxopentanoate + tRNA(Glu) + NADP(+) = L-glutamyl-tRNA(Glu) + NADPH + H(+). It functions in the pathway porphyrin-containing compound metabolism; protoporphyrin-IX biosynthesis; 5-aminolevulinate from L-glutamyl-tRNA(Glu): step 1/2. Catalyzes the NADPH-dependent reduction of glutamyl-tRNA(Glu) to glutamate 1-semialdehyde (GSA). This chain is Glutamyl-tRNA reductase, found in Chlamydia caviae (strain ATCC VR-813 / DSM 19441 / 03DC25 / GPIC) (Chlamydophila caviae).